Reading from the N-terminus, the 426-residue chain is Serine hydroxymethyltransferase (426 aa).

Residues Leu115 and 119-121 contribute to the (6S)-5,6,7,8-tetrahydrofolate site; that span reads GHI. Lys225 is modified (N6-(pyridoxal phosphate)lysine).

It belongs to the SHMT family. Homodimer. The cofactor is pyridoxal 5'-phosphate.

It is found in the cytoplasm. Its pathway is amino-acid biosynthesis; glycine biosynthesis; glycine from L-serine: step 1/1. Catalyzes the reversible interconversion of serine and glycine with a modified folate serving as the one-carbon carrier. Also exhibits a pteridine-independent aldolase activity toward beta-hydroxyamino acids, producing glycine and aldehydes, via a retro-aldol mechanism. The chain is Serine hydroxymethyltransferase from Thermoplasma volcanium (strain ATCC 51530 / DSM 4299 / JCM 9571 / NBRC 15438 / GSS1).